The primary structure comprises 73 residues: Translation initiation factor IF-1 (73 aa).

Residues 1–72 (MAKDEIIEFE…SKGRITYRGK (72 aa)) enclose the S1-like domain.

Belongs to the IF-1 family. As to quaternary structure, component of the 30S ribosomal translation pre-initiation complex which assembles on the 30S ribosome in the order IF-2 and IF-3, IF-1 and N-formylmethionyl-tRNA(fMet); mRNA recruitment can occur at any time during PIC assembly.

It is found in the cytoplasm. One of the essential components for the initiation of protein synthesis. Stabilizes the binding of IF-2 and IF-3 on the 30S subunit to which N-formylmethionyl-tRNA(fMet) subsequently binds. Helps modulate mRNA selection, yielding the 30S pre-initiation complex (PIC). Upon addition of the 50S ribosomal subunit IF-1, IF-2 and IF-3 are released leaving the mature 70S translation initiation complex. The chain is Translation initiation factor IF-1 from Psychrobacter arcticus (strain DSM 17307 / VKM B-2377 / 273-4).